Reading from the N-terminus, the 149-residue chain is Nucleoside diphosphate kinase (149 aa).

The ATP site is built by Lys9, Phe57, Arg85, Thr91, Arg102, and Asn112. His115 serves as the catalytic Pros-phosphohistidine intermediate.

Belongs to the NDK family. Homotetramer. Mg(2+) serves as cofactor.

It localises to the cytoplasm. The catalysed reaction is a 2'-deoxyribonucleoside 5'-diphosphate + ATP = a 2'-deoxyribonucleoside 5'-triphosphate + ADP. It carries out the reaction a ribonucleoside 5'-diphosphate + ATP = a ribonucleoside 5'-triphosphate + ADP. In terms of biological role, major role in the synthesis of nucleoside triphosphates other than ATP. The ATP gamma phosphate is transferred to the NDP beta phosphate via a ping-pong mechanism, using a phosphorylated active-site intermediate. In Desulforamulus reducens (strain ATCC BAA-1160 / DSM 100696 / MI-1) (Desulfotomaculum reducens), this protein is Nucleoside diphosphate kinase.